Consider the following 121-residue polypeptide: Large ribosomal subunit protein bL20 (121 aa).

Belongs to the bacterial ribosomal protein bL20 family.

Functionally, binds directly to 23S ribosomal RNA and is necessary for the in vitro assembly process of the 50S ribosomal subunit. It is not involved in the protein synthesizing functions of that subunit. The sequence is that of Large ribosomal subunit protein bL20 from Polynucleobacter asymbioticus (strain DSM 18221 / CIP 109841 / QLW-P1DMWA-1) (Polynucleobacter necessarius subsp. asymbioticus).